A 58-amino-acid polypeptide reads, in one-letter code: Large ribosomal subunit protein uL30 (58 aa).

The protein belongs to the universal ribosomal protein uL30 family. In terms of assembly, part of the 50S ribosomal subunit.

This chain is Large ribosomal subunit protein uL30, found in Vibrio campbellii (strain ATCC BAA-1116).